Consider the following 65-residue polypeptide: Large ribosomal subunit protein bL35 (65 aa).

This sequence belongs to the bacterial ribosomal protein bL35 family.

The polypeptide is Large ribosomal subunit protein bL35 (Baumannia cicadellinicola subsp. Homalodisca coagulata).